Here is a 632-residue protein sequence, read N- to C-terminus: MTTSALRRQVKNIVHNYSEAEIKVREATSNDPWGPPSSLMSEIADLTFNTVAFTEVMGMLWRRLNDSGKNWRHVYKALTLLDYLLKTGSERVAHQCRENLYTIQTLKDFQYIDRDGKDQGVNVREKVKQVMALLKDEERLRQERTHALKTKERMALEGIGIGSGQLGFSRRYGEDYSRSRGSPSSYNSSSSSPRYTSDLEQARPQTSGEEELQLQLALAMSREEAEKPVPPASHRDEDLQLQLALRLSRQEHEKEVRSWQGDGSPMANGAGAVVHHQRDREPEREERKEEEKLKTSQSSILDLADIFVPALAPPSTHCSADPWDIPGFRPNTEASGSSWGPSADPWSPIPSGTVLSRSQPWDLTPMLSSSEPWGRTPVLPAGPPTTDPWALNSPHHKLPSTGADPWGASLETSDTPGGASTFDPFAKPPESTETKEGLEQALPSGKPSSPVELDLFGDPSPSSKQNGTKEPDALDLGILGEALTQPSKEARACRTPESFLGPSASSLVNLDSLVKAPQVAKTRNPFLTGLSAPSPTNPFGAGEPGRPTLNQMRTGSPALGLAGGPVGAPLGSMTYSASLPLPLSSVPAGLTLPASVSVFPQAGAFAPQPLLPTPSSAGPRPPPPQTGTNPFL.

6 residues coordinate a 1,2-diacyl-sn-glycero-3-phospho-(1D-myo-inositol-4,5-bisphosphate): R8, K11, R25, N30, R63, and H73. Residues 12 to 144 (NIVHNYSEAE…KDEERLRQER (133 aa)) form the ENTH domain. The disordered stretch occupies residues 172–214 (YGEDYSRSRGSPSSYNSSSSSPRYTSDLEQARPQTSGEEELQL). The segment covering 179 to 196 (SRGSPSSYNSSSSSPRYT) has biased composition (low complexity). Residues S191 and S192 each carry the phosphoserine modification. 2 UIM domains span residues 209-228 (EEEL…AEKP) and 236-255 (DEDL…HEKE). Residues 257–296 (RSWQGDGSPMANGAGAVVHHQRDREPEREERKEEEKLKTS) are disordered. S264 carries the post-translational modification Phosphoserine. The segment covering 276–294 (HQRDREPEREERKEEEKLK) has biased composition (basic and acidic residues). 8 consecutive repeat copies span residues 321-323 (DPW), 344-346 (DPW), 371-373 (EPW), 387-389 (DPW), 404-406 (DPW), 524-526 (NPF), 537-539 (NPF), and 629-631 (NPF). A 5 X 3 AA repeats of [DE]-P-W region spans residues 321–406 (DPWDIPGFRP…KLPSTGADPW (86 aa)). Disordered regions lie at residues 326–501 (PGFR…SFLG), 525–560 (PFLT…PALG), and 604–632 (AFAP…NPFL). Over residues 353-371 (TVLSRSQPWDLTPMLSSSE) the composition is skewed to polar residues. Residues 524-631 (NPFLTGLSAP…PPPQTGTNPF (108 aa)) form a 3 X 3 AA repeats of N-P-F region.

The protein belongs to the epsin family. As to expression, detected in migrating keratinocytes from wounded skin, but not in differentiating keratinocytes or in normal skin. Detected in chronic wounds, basal cell carcinoma and ulcerative colitis.

The protein localises to the cytoplasm. Its subcellular location is the perinuclear region. It localises to the cytoplasmic vesicle. It is found in the clathrin-coated vesicle. The protein resides in the nucleus. The protein is Epsin-3 (EPN3) of Homo sapiens (Human).